Reading from the N-terminus, the 293-residue chain is 4-diphosphocytidyl-2-C-methyl-D-erythritol kinase (293 aa).

Lys16 is an active-site residue. Position 99–109 (99–109 (PMGAGLGGGSS)) interacts with ATP. Asp141 is an active-site residue.

It belongs to the GHMP kinase family. IspE subfamily.

It carries out the reaction 4-CDP-2-C-methyl-D-erythritol + ATP = 4-CDP-2-C-methyl-D-erythritol 2-phosphate + ADP + H(+). Its pathway is isoprenoid biosynthesis; isopentenyl diphosphate biosynthesis via DXP pathway; isopentenyl diphosphate from 1-deoxy-D-xylulose 5-phosphate: step 3/6. Functionally, catalyzes the phosphorylation of the position 2 hydroxy group of 4-diphosphocytidyl-2C-methyl-D-erythritol. This Burkholderia orbicola (strain MC0-3) protein is 4-diphosphocytidyl-2-C-methyl-D-erythritol kinase.